A 497-amino-acid polypeptide reads, in one-letter code: Probable malate:quinone oxidoreductase (497 aa).

This sequence belongs to the MQO family. Requires FAD as cofactor.

The enzyme catalyses (S)-malate + a quinone = a quinol + oxaloacetate. The protein operates within carbohydrate metabolism; tricarboxylic acid cycle; oxaloacetate from (S)-malate (quinone route): step 1/1. This chain is Probable malate:quinone oxidoreductase, found in Bacillus cereus (strain ATCC 14579 / DSM 31 / CCUG 7414 / JCM 2152 / NBRC 15305 / NCIMB 9373 / NCTC 2599 / NRRL B-3711).